A 217-amino-acid polypeptide reads, in one-letter code: NAD(P)H-quinone oxidoreductase subunit M, chloroplastic (217 aa).

The N-terminal 21 residues, 1-21 (MVAAFSYTACTKLSLLHPSMV), are a transit peptide targeting the chloroplast. Positions 48-67 (ETETLKEEQSTEKMKKQPTP) are disordered. Residues 50–62 (ETLKEEQSTEKMK) show a composition bias toward basic and acidic residues.

Belongs to the NDH complex subunit M family. As to quaternary structure, part of the chloroplast NDH complex, composed of a mixture of chloroplast and nucleus encoded subunits. Component of the NDH subcomplex A, at least composed of ndhH, ndhI, ndhJ, ndhK, ndhL, ndhM, ndhN and ndhO.

It localises to the plastid. The protein resides in the chloroplast thylakoid membrane. The catalysed reaction is a plastoquinone + NADH + (n+1) H(+)(in) = a plastoquinol + NAD(+) + n H(+)(out). It catalyses the reaction a plastoquinone + NADPH + (n+1) H(+)(in) = a plastoquinol + NADP(+) + n H(+)(out). NDH shuttles electrons from NAD(P)H:plastoquinone, via FMN and iron-sulfur (Fe-S) centers, to quinones in the photosynthetic chain and possibly in a chloroplast respiratory chain. The immediate electron acceptor for the enzyme in this species is believed to be plastoquinone. Couples the redox reaction to proton translocation, and thus conserves the redox energy in a proton gradient. The polypeptide is NAD(P)H-quinone oxidoreductase subunit M, chloroplastic (Arabidopsis thaliana (Mouse-ear cress)).